Here is a 335-residue protein sequence, read N- to C-terminus: 2-acylglycerol O-acyltransferase 1 (335 aa).

Helical transmembrane passes span 24–44 (WVFS…SLVL) and 47–67 (LWLI…TPQA). Asn-77, Asn-125, and Asn-180 each carry an N-linked (GlcNAc...) asparagine glycan.

Belongs to the diacylglycerol acyltransferase family.

It is found in the endoplasmic reticulum membrane. The catalysed reaction is a 2-acylglycerol + an acyl-CoA = a 1,2-diacylglycerol + CoA. It carries out the reaction a 2-acylglycerol + an acyl-CoA = a 1,2-diacyl-sn-glycerol + CoA. The enzyme catalyses a 2-acylglycerol + an acyl-CoA = a 2,3-diacyl-sn-glycerol + CoA. It catalyses the reaction a 1-acylglycerol + an acyl-CoA = a 1,2-diacylglycerol + CoA. The catalysed reaction is a 1-acylglycerol + an acyl-CoA = a 1,3-diacylglycerol + CoA. It carries out the reaction a 1-acyl-sn-glycerol + an acyl-CoA = a 1,3-diacyl-sn-glycerol + CoA. The enzyme catalyses a 3-acyl-sn-glycerol + an acyl-CoA = a 1,3-diacyl-sn-glycerol + CoA. It participates in glycerolipid metabolism; triacylglycerol biosynthesis. Its function is as follows. Involved in glycerolipid synthesis and lipid metabolism. Catalyzes the formation of diacylglycerol, the precursor of triacylglycerol, by transferring the acyl chain of a fatty acyl-CoA to a monoacylglycerol, mainly at the sn-1 or sn-3 positions. It uses both sn-2-monoacylglycerol (2-acylglycerol) and sn-1-monoacylglycerol (1-acyl-sn-glycerol) equally well as substrates, and uses sn-3-monoacylglycerol (3-acyl-sn-glycerol) with lower efficiency. The protein is 2-acylglycerol O-acyltransferase 1 (mogat1) of Xenopus tropicalis (Western clawed frog).